Here is a 47-residue protein sequence, read N- to C-terminus: Short transmembrane mitochondrial protein 1 (47 aa).

Residues Gly7–Asp23 form a helical membrane-spanning segment.

This sequence belongs to the STMP1 family. Interacts with components of the ubiquinol-cytochrome c oxidoreductase (cytochrome b-c1 complex, complex III, CIII), such as UQCRC1/QCR1, UQCRC2/QCR2 and UQCR10/QCR9. Interacts with components of the cytochrome c oxidase (mitochondrial respiratory chain complex IV) complex, such as MT-CO2. Expressed in monocytes and dendritic cells.

It is found in the mitochondrion inner membrane. The protein localises to the mitochondrion outer membrane. It localises to the mitochondrion intermembrane space. Its function is as follows. Microprotein involved in mitochondrial respiratory chain complex III (ubiquinol-cytochrome c oxidoreductase) and complex IV (mitochondrial cytochrome c oxidase complex) assembly. Required for the formation of mitochondrial supercomplexes (SCs). Also required for the activation of the NLRP3 inflammasome. In Homo sapiens (Human), this protein is Short transmembrane mitochondrial protein 1.